Reading from the N-terminus, the 200-residue chain is Small ribosomal subunit protein uS2 (200 aa).

The protein belongs to the universal ribosomal protein uS2 family.

The protein is Small ribosomal subunit protein uS2 of Picrophilus torridus (strain ATCC 700027 / DSM 9790 / JCM 10055 / NBRC 100828 / KAW 2/3).